We begin with the raw amino-acid sequence, 448 residues long: Glucose-6-phosphate isomerase (448 aa).

Residue Glu-288 is the Proton donor of the active site. Active-site residues include His-309 and Lys-423.

It belongs to the GPI family.

The protein resides in the cytoplasm. The enzyme catalyses alpha-D-glucose 6-phosphate = beta-D-fructose 6-phosphate. It participates in carbohydrate biosynthesis; gluconeogenesis. It functions in the pathway carbohydrate degradation; glycolysis; D-glyceraldehyde 3-phosphate and glycerone phosphate from D-glucose: step 2/4. Functionally, catalyzes the reversible isomerization of glucose-6-phosphate to fructose-6-phosphate. The sequence is that of Glucose-6-phosphate isomerase from Fusobacterium nucleatum subsp. nucleatum (strain ATCC 25586 / DSM 15643 / BCRC 10681 / CIP 101130 / JCM 8532 / KCTC 2640 / LMG 13131 / VPI 4355).